The sequence spans 159 residues: U-actitoxin-Avd13b (159 aa).

Residues 1–18 (MKSIFLVFFAVCLVKAEA) form the signal peptide. The propeptide occupies 19–26 (GKGRKREP). 2 disulfide bridges follow: Cys33–Cys45 and Cys36–Cys52. A propeptide spanning residues 59–60 (EP) is cleaved from the precursor. 2 cysteine pairs are disulfide-bonded: Cys67/Cys79 and Cys70/Cys86. Positions 93-94 (EP) are excised as a propeptide. 2 disulfides stabilise this stretch: Cys101–Cys113 and Cys104–Cys120. Residues 127 to 128 (EP) constitute a propeptide that is removed on maturation. Intrachain disulfides connect Cys135-Cys147 and Cys138-Cys154.

It belongs to the sea anemone BBH family.

The protein resides in the secreted. The protein localises to the nematocyst. In terms of biological role, inhibits ion channels. The chain is U-actitoxin-Avd13b from Anemonia viridis (Snakelocks anemone).